The primary structure comprises 65 residues: Alpha-like toxin Bom4 (65 aa).

Residues 2-64 enclose the LCN-type CS-alpha/beta domain; it reads RDAYIAQPEN…VPIRIPGKCH (63 aa). 4 cysteine pairs are disulfide-bonded: Cys-12-Cys-63, Cys-16-Cys-36, Cys-22-Cys-46, and Cys-26-Cys-48.

This sequence belongs to the long (4 C-C) scorpion toxin superfamily. Sodium channel inhibitor family. Alpha subfamily. In terms of tissue distribution, expressed by the venom gland.

The protein resides in the secreted. Alpha toxins bind voltage-independently at site-3 of sodium channels (Nav) and inhibit the inactivation of the activated channels, thereby blocking neuronal transmission. This alpha-like toxin is highly toxic to mice and insects. The polypeptide is Alpha-like toxin Bom4 (Buthus occitanus mardochei (Moroccan scorpion)).